A 546-amino-acid chain; its full sequence is Probable lysosomal cobalamin transporter (546 aa).

Helical transmembrane passes span 8-28 (LAQG…FSWF), 48-68 (IIAL…IFLV), 102-122 (ILYA…YFFF), and 141-161 (YSIG…FAPL). N167 carries N-linked (GlcNAc...) asparagine glycosylation. A run of 4 helical transmembrane segments spans residues 189 to 209 (TALS…MITY), 304 to 324 (MVFG…LFIT), 352 to 372 (IIMV…LLVV), and 407 to 427 (ALLF…VMLF). N444, N452, and N459 each carry an N-linked (GlcNAc...) asparagine glycan. The chain crosses the membrane as a helical span at residues 495-515 (VWFFGACYYWGTWLFLVVFMT).

It belongs to the LIMR family. LMBRD1 subfamily.

The protein localises to the lysosome membrane. Probable lysosomal cobalamin transporter. Required to export cobalamin from lysosomes allowing its conversion to cofactors. The polypeptide is Probable lysosomal cobalamin transporter (Nematostella vectensis (Starlet sea anemone)).